Here is a 335-residue protein sequence, read N- to C-terminus: Malate dehydrogenase (335 aa).

Residue 11-17 coordinates NAD(+); the sequence is GAAGQIG. Residues Arg-94 and Arg-100 each contribute to the substrate site. Residues Asn-107, Gln-114, and 131–133 each bind NAD(+); that span reads VGN. The substrate site is built by Asn-133 and Arg-167. His-192 acts as the Proton acceptor in catalysis.

Belongs to the LDH/MDH superfamily. MDH type 2 family.

The catalysed reaction is (S)-malate + NAD(+) = oxaloacetate + NADH + H(+). Its function is as follows. Catalyzes the reversible oxidation of malate to oxaloacetate. In Bdellovibrio bacteriovorus (strain ATCC 15356 / DSM 50701 / NCIMB 9529 / HD100), this protein is Malate dehydrogenase.